The following is a 271-amino-acid chain: Thermoregulatory protein LcrF (271 aa).

Residues 167 to 265 (ERLQKFMEEN…GCTPSQARLT (99 aa)) enclose the HTH araC/xylS-type domain. 2 consecutive DNA-binding regions (H-T-H motif) follow at residues 184–205 (SKFA…GTVY) and 232–255 (IVDI…RRRF).

In terms of biological role, transcriptional activator of the thermally regulated virulent yopE gene. LcrF activity could be modulated by the interaction with an inducer molecule serving as a temperature messenger. The availability of the messenger would in turn be controlled by a temperature-responsive process serving as a cellular thermometer. The protein is Thermoregulatory protein LcrF (lcrF) of Yersinia pestis.